The following is a 103-amino-acid chain: Flagellar hook-basal body complex protein FliE (103 aa).

The protein belongs to the FliE family.

It localises to the bacterial flagellum basal body. The protein is Flagellar hook-basal body complex protein FliE of Yersinia pestis.